The following is a 463-amino-acid chain: Glutamyl-tRNA(Gln) amidotransferase subunit A, mitochondrial (463 aa).

Catalysis depends on charge relay system residues K47 and S124. The active-site Acyl-ester intermediate is S148.

It belongs to the amidase family. GatA subfamily. Subunit of the heterotrimeric GatFAB amidotransferase (AdT) complex, composed of A, B and F subunits.

The protein resides in the mitochondrion. The enzyme catalyses L-glutamyl-tRNA(Gln) + L-glutamine + ATP + H2O = L-glutaminyl-tRNA(Gln) + L-glutamate + ADP + phosphate + H(+). In terms of biological role, allows the formation of correctly charged Gln-tRNA(Gln) through the transamidation of misacylated Glu-tRNA(Gln) in the mitochondria. The reaction takes place in the presence of glutamine and ATP through an activated gamma-phospho-Glu-tRNA(Gln). This is Glutamyl-tRNA(Gln) amidotransferase subunit A, mitochondrial from Eremothecium gossypii (strain ATCC 10895 / CBS 109.51 / FGSC 9923 / NRRL Y-1056) (Yeast).